We begin with the raw amino-acid sequence, 432 residues long: Glutamyl-tRNA reductase (432 aa).

Substrate is bound by residues T49–R52, S109, E114–Q116, and Q120. Residue C50 is the Nucleophile of the active site. Position 198–203 (G198–S203) interacts with NADP(+).

Belongs to the glutamyl-tRNA reductase family. As to quaternary structure, homodimer.

The enzyme catalyses (S)-4-amino-5-oxopentanoate + tRNA(Glu) + NADP(+) = L-glutamyl-tRNA(Glu) + NADPH + H(+). It functions in the pathway porphyrin-containing compound metabolism; protoporphyrin-IX biosynthesis; 5-aminolevulinate from L-glutamyl-tRNA(Glu): step 1/2. Its pathway is porphyrin-containing compound metabolism; chlorophyll biosynthesis. Catalyzes the NADPH-dependent reduction of glutamyl-tRNA(Glu) to glutamate 1-semialdehyde (GSA). This Synechococcus sp. (strain CC9605) protein is Glutamyl-tRNA reductase.